Reading from the N-terminus, the 47-residue chain is Large ribosomal subunit protein bL34 (47 aa).

The protein belongs to the bacterial ribosomal protein bL34 family.

In Mycolicibacterium smegmatis (strain ATCC 700084 / mc(2)155) (Mycobacterium smegmatis), this protein is Large ribosomal subunit protein bL34 (rpmH).